We begin with the raw amino-acid sequence, 77 residues long: Putative defensin-like protein 60 (77 aa).

The N-terminal stretch at 1–25 (MKMNITKSYVILFLVVVMTNSLSNS) is a signal peptide. 4 disulfide bridges follow: Cys41–Cys75, Cys45–Cys68, Cys54–Cys73, and Cys58–Cys74.

It belongs to the DEFL family.

The protein localises to the secreted. The sequence is that of Putative defensin-like protein 60 from Arabidopsis thaliana (Mouse-ear cress).